A 157-amino-acid chain; its full sequence is Small ribosomal subunit protein uS7 (157 aa).

The protein belongs to the universal ribosomal protein uS7 family. As to quaternary structure, part of the 30S ribosomal subunit. Contacts proteins S9 and S11.

In terms of biological role, one of the primary rRNA binding proteins, it binds directly to 16S rRNA where it nucleates assembly of the head domain of the 30S subunit. Is located at the subunit interface close to the decoding center, probably blocks exit of the E-site tRNA. The sequence is that of Small ribosomal subunit protein uS7 from Francisella tularensis subsp. holarctica (strain OSU18).